A 312-amino-acid polypeptide reads, in one-letter code: Ribosomal RNA small subunit methyltransferase H (312 aa).

Residues 34–36 (AGH), aspartate 54, phenylalanine 81, aspartate 102, and glutamine 109 each bind S-adenosyl-L-methionine.

The protein belongs to the methyltransferase superfamily. RsmH family.

The protein localises to the cytoplasm. It carries out the reaction cytidine(1402) in 16S rRNA + S-adenosyl-L-methionine = N(4)-methylcytidine(1402) in 16S rRNA + S-adenosyl-L-homocysteine + H(+). Functionally, specifically methylates the N4 position of cytidine in position 1402 (C1402) of 16S rRNA. The polypeptide is Ribosomal RNA small subunit methyltransferase H (Citrifermentans bemidjiense (strain ATCC BAA-1014 / DSM 16622 / JCM 12645 / Bem) (Geobacter bemidjiensis)).